Reading from the N-terminus, the 109-residue chain is Ribonuclease P protein component (109 aa).

It belongs to the RnpA family. In terms of assembly, consists of a catalytic RNA component (M1 or rnpB) and a protein subunit.

It catalyses the reaction Endonucleolytic cleavage of RNA, removing 5'-extranucleotides from tRNA precursor.. Functionally, RNaseP catalyzes the removal of the 5'-leader sequence from pre-tRNA to produce the mature 5'-terminus. It can also cleave other RNA substrates such as 4.5S RNA. The protein component plays an auxiliary but essential role in vivo by binding to the 5'-leader sequence and broadening the substrate specificity of the ribozyme. In Streptococcus agalactiae serotype Ia (strain ATCC 27591 / A909 / CDC SS700), this protein is Ribonuclease P protein component.